The following is a 707-amino-acid chain: MARNIPLERVRNIGIAAHIDAGKTTTTERILFYSGVIHKIGEVHEGNTVTDWMAQERERGITITAAAITTAWTRRDPENPTQPLPGALEHKINIIDTPGHVDFTIEVERSMRVLDGVITVLCSVGGVQPQTETVWRQANRYNVPRFIFVNKMDRTGANFYKVYSQVRDRLRANAVPIQLPIGAEDTLSGIVDLVGMKAYVYGNDIGTDIRVEEIPADMEELVQEYRAKLIEAVSETDDVLLEKYFGGEELTEAEIKAALRKGTVANTIVPMLCGSAFKNKGVQQMLDAVLDYLPSPLDIPPIKGLLPNGTEVERSADDSQPLSALAFKIMADPYGRLTFVRVYSGILQKGSYALNASKDKKERISRLIVLKADDRIEVDELRAGDLGAVVGLKDTFTGDTLCTEDSPVILESLFIPEPVISVAIEPKTKADLDKLSKALQSLSEEDPTFRVHVDQETNQTIIAGMGELHLEILVDRMLREFKVEANVGAPQVAYRETIRKAVNNVEGLYKRQTGGKGQYGHVVINLEPGEPGTGFEFVSKIVGGVVPKEYIGPAEQGMKERCESGVIAGYPLIDVKVTMVDGSYHDVDSSEMAFKIAGSLALREAAQKAQPVLLEPMMKVEVEVSGDFLGDVMGDLNARRGQIESMDNEGGVSKVTSRVPLAEMFGYATDIRSKTQGRGTFSMEFSHYEEVPRNVAETIIAKNKGNA.

In terms of domain architecture, tr-type G spans 8–297; the sequence is ERVRNIGIAA…AVLDYLPSPL (290 aa). Residues 17-24, 96-100, and 150-153 each bind GTP; these read AHIDAGKT, DTPGH, and NKMD.

Belongs to the TRAFAC class translation factor GTPase superfamily. Classic translation factor GTPase family. EF-G/EF-2 subfamily.

Its subcellular location is the cytoplasm. Catalyzes the GTP-dependent ribosomal translocation step during translation elongation. During this step, the ribosome changes from the pre-translocational (PRE) to the post-translocational (POST) state as the newly formed A-site-bound peptidyl-tRNA and P-site-bound deacylated tRNA move to the P and E sites, respectively. Catalyzes the coordinated movement of the two tRNA molecules, the mRNA and conformational changes in the ribosome. The sequence is that of Elongation factor G from Gloeobacter violaceus (strain ATCC 29082 / PCC 7421).